Consider the following 453-residue polypeptide: Dibenzothiophene-sulfone monooxygenase (453 aa).

FMN-binding residues include D59, T106, H156, Y160, and S231.

This sequence belongs to the NtaA/SnaA/DszA monooxygenase family. Homodimer.

It is found in the cytoplasm. The catalysed reaction is dibenzothiophene 5,5-dioxide + FMNH2 + NADH + O2 = 2'-hydroxybiphenyl-2-sulfinate + FMN + NAD(+) + H2O + H(+). It functions in the pathway sulfur metabolism; dibenzothiophene degradation. Functionally, catalyzes the second step of the '4S' desulfurization pathway that removes covalently bound sulfur from dibenzothiophene (DBT) without breaking carbon-carbon bonds. Metabolizes DBT-sulfone (DBTO2 or DBT 5,5-dioxide) to 2-(2'-hydroxyphenyl)benzene sulphinate (HBPS). This is Dibenzothiophene-sulfone monooxygenase from Rhodococcus erythropolis (strain XP).